Reading from the N-terminus, the 415-residue chain is Gamma-glutamyl phosphate reductase (415 aa).

The protein belongs to the gamma-glutamyl phosphate reductase family.

It localises to the cytoplasm. The enzyme catalyses L-glutamate 5-semialdehyde + phosphate + NADP(+) = L-glutamyl 5-phosphate + NADPH + H(+). It participates in amino-acid biosynthesis; L-proline biosynthesis; L-glutamate 5-semialdehyde from L-glutamate: step 2/2. Its function is as follows. Catalyzes the NADPH-dependent reduction of L-glutamate 5-phosphate into L-glutamate 5-semialdehyde and phosphate. The product spontaneously undergoes cyclization to form 1-pyrroline-5-carboxylate. The polypeptide is Gamma-glutamyl phosphate reductase (Bacillus cereus (strain ATCC 10987 / NRS 248)).